A 122-amino-acid chain; its full sequence is Small ribosomal subunit protein uS13 (122 aa).

The disordered stretch occupies residues 98-122 (VRGQRTHTNARTRKGPAKAIAGKKK).

Belongs to the universal ribosomal protein uS13 family. In terms of assembly, part of the 30S ribosomal subunit. Forms a loose heterodimer with protein S19. Forms two bridges to the 50S subunit in the 70S ribosome.

Its function is as follows. Located at the top of the head of the 30S subunit, it contacts several helices of the 16S rRNA. In the 70S ribosome it contacts the 23S rRNA (bridge B1a) and protein L5 of the 50S subunit (bridge B1b), connecting the 2 subunits; these bridges are implicated in subunit movement. Contacts the tRNAs in the A and P-sites. The protein is Small ribosomal subunit protein uS13 of Roseobacter denitrificans (strain ATCC 33942 / OCh 114) (Erythrobacter sp. (strain OCh 114)).